Reading from the N-terminus, the 366-residue chain is Flagellar P-ring protein (366 aa).

Positions 1–27 are cleaved as a signal peptide; sequence MKSKYSIFCMFLLRGFIFLGTVFSLNS.

The protein belongs to the FlgI family. As to quaternary structure, the basal body constitutes a major portion of the flagellar organelle and consists of four rings (L,P,S, and M) mounted on a central rod.

The protein resides in the periplasm. Its subcellular location is the bacterial flagellum basal body. Functionally, assembles around the rod to form the L-ring and probably protects the motor/basal body from shearing forces during rotation. The chain is Flagellar P-ring protein from Leptospira interrogans serogroup Icterohaemorrhagiae serovar copenhageni (strain Fiocruz L1-130).